The primary structure comprises 150 residues: Transthyretin (150 aa).

A signal peptide spans 1-20 (MGSSSLLLVCLAGMVYLTEA). C33 bears the Sulfocysteine mark. L-thyroxine-binding residues include K38, E77, and S140.

Belongs to the transthyretin family. In terms of assembly, homotetramer. Dimer of dimers. In the homotetramer, subunits assemble around a central channel that can accommodate two ligand molecules. Interacts with RBP4. Sulfonation of the reactive cysteine Cys-33 enhances the stability of the native conformation of TTR, avoiding misassembly of the protein leading to amyloid formation. As to expression, detected in choroid plexus (at protein level). Detected in choroid plexus.

The protein localises to the secreted. In terms of biological role, thyroid hormone-binding protein. Probably transports thyroxine from the bloodstream to the brain. The sequence is that of Transthyretin (TTR) from Tiliqua rugosa (Shingleback lizard).